The primary structure comprises 213 residues: LexA repressor 2 (213 aa).

Residues 27–47 (QTEIARAFGFKGVRAAQYHLE) constitute a DNA-binding region (H-T-H motif). Residues serine 133 and lysine 170 each act as for autocatalytic cleavage activity in the active site.

This sequence belongs to the peptidase S24 family. Homodimer.

It carries out the reaction Hydrolysis of Ala-|-Gly bond in repressor LexA.. Its function is as follows. Represses a number of genes involved in the response to DNA damage (SOS response), including recA and lexA. In the presence of single-stranded DNA, RecA interacts with LexA causing an autocatalytic cleavage which disrupts the DNA-binding part of LexA, leading to derepression of the SOS regulon and eventually DNA repair. This Xanthomonas oryzae pv. oryzae (strain KACC10331 / KXO85) protein is LexA repressor 2.